Reading from the N-terminus, the 353-residue chain is Phosphate acyltransferase (353 aa).

Belongs to the PlsX family. Homodimer. Probably interacts with PlsY.

The protein resides in the cytoplasm. It catalyses the reaction a fatty acyl-[ACP] + phosphate = an acyl phosphate + holo-[ACP]. Its pathway is lipid metabolism; phospholipid metabolism. In terms of biological role, catalyzes the reversible formation of acyl-phosphate (acyl-PO(4)) from acyl-[acyl-carrier-protein] (acyl-ACP). This enzyme utilizes acyl-ACP as fatty acyl donor, but not acyl-CoA. The chain is Phosphate acyltransferase from Rhodopseudomonas palustris (strain HaA2).